Reading from the N-terminus, the 515-residue chain is Peroxisomal catalase A (515 aa).

S2 is modified (N-acetylserine). Catalysis depends on residues H70 and N143. Position 355 (Y355) interacts with heme. A Microbody targeting signal motif is present at residues 513 to 515 (SKF).

It belongs to the catalase family. As to quaternary structure, homotetramer. The cofactor is heme.

The protein resides in the peroxisome matrix. The enzyme catalyses 2 H2O2 = O2 + 2 H2O. Catalyzes the degradation of hydrogen peroxide (H(2)O(2)) generated by peroxisomal oxidases to water and oxygen, thereby protecting cells from the toxic effects of hydrogen peroxide. In Saccharomyces cerevisiae (strain ATCC 204508 / S288c) (Baker's yeast), this protein is Peroxisomal catalase A (CTA1).